The sequence spans 436 residues: Trigger factor (436 aa).

A PPIase FKBP-type domain is found at 163–248 (DDRIVLDFAG…VKEVAEAVLP (86 aa)).

Belongs to the FKBP-type PPIase family. Tig subfamily.

The protein resides in the cytoplasm. The enzyme catalyses [protein]-peptidylproline (omega=180) = [protein]-peptidylproline (omega=0). Involved in protein export. Acts as a chaperone by maintaining the newly synthesized protein in an open conformation. Functions as a peptidyl-prolyl cis-trans isomerase. This chain is Trigger factor, found in Bordetella avium (strain 197N).